A 91-amino-acid polypeptide reads, in one-letter code: MPRSLKKGPFIDLHLLKKIEVAAEKNDRKPVKTWSRRSMILPQMVGLTIAVHNGRQHVPVLVSEDMVGHKLGEFAGTRTYRGHVADKKAKR.

The protein belongs to the universal ribosomal protein uS19 family.

Its function is as follows. Protein S19 forms a complex with S13 that binds strongly to the 16S ribosomal RNA. The sequence is that of Small ribosomal subunit protein uS19 from Pseudomonas syringae pv. tomato (strain ATCC BAA-871 / DC3000).